The following is a 217-amino-acid chain: Gas vesicle protein F2 (217 aa).

This sequence belongs to the gas vesicle GvpF/GvpL family. In terms of assembly, binds GvpA.

The protein resides in the gas vesicle. Its subcellular location is the cytoplasm. Its function is as follows. A minor component of the gas vesicle, may be involved in preventing GvpA aggregation during gas vesicle nucleation. Gas vesicles are hollow, gas filled proteinaceous nanostructures found in several microbial planktonic microorganisms. They allow positioning of halobacteria at the optimal depth for growth in the poorly aerated, shallow brine pools of their habitat. Expression of 2 c-vac DNA fragments containing 2 divergently transcribed regions (gvpE-gvpF-gvpG-gvpH-gvpI-gvpJ-gvpK-gvpL-gvpM and gvpA-gvpC-gvpN-gvpO) allows H.volcanii to produce gas vesicles. Note that gvpD is not necessary for gas vesicle formation. The polypeptide is Gas vesicle protein F2 (Halobacterium salinarum (strain ATCC 700922 / JCM 11081 / NRC-1) (Halobacterium halobium)).